We begin with the raw amino-acid sequence, 333 residues long: D-lactate dehydrogenase (333 aa).

Residues 156–157 (HI), Asp176, 207–208 (VP), Asn213, 234–236 (VSR), and Asp260 contribute to the NAD(+) site. The active site involves Arg236. Residue Glu265 is part of the active site. His297 functions as the Proton donor in the catalytic mechanism.

The protein belongs to the D-isomer specific 2-hydroxyacid dehydrogenase family. In terms of assembly, homodimer.

The enzyme catalyses (R)-lactate + NAD(+) = pyruvate + NADH + H(+). In Lactobacillus delbrueckii subsp. bulgaricus (strain ATCC 11842 / DSM 20081 / BCRC 10696 / JCM 1002 / NBRC 13953 / NCIMB 11778 / NCTC 12712 / WDCM 00102 / Lb 14), this protein is D-lactate dehydrogenase (ldhA).